The following is a 330-amino-acid chain: RNA polymerase sigma factor RpoS (330 aa).

Residues 56–89 (DATQLYLGEIGYSPLLTAEEEVYFARRALRGDVA) form a sigma-70 factor domain-1 region. The tract at residues 94–164 (MIESNLRLVV…ERAIMNQTRT (71 aa)) is sigma-70 factor domain-2. An Interaction with polymerase core subunit RpoC motif is present at residues 118–121 (DLIE). The interval 174-249 (ELNVYLRTAR…DEKENGPEDT (76 aa)) is sigma-70 factor domain-3. The segment at 262-315 (WLFELNAKQREVLARRFGLLGYEAATLEDVGREIGLTRERVRQIQVEGLRRLRE) is sigma-70 factor domain-4. Residues 288 to 307 (LEDVGREIGLTRERVRQIQV) constitute a DNA-binding region (H-T-H motif).

This sequence belongs to the sigma-70 factor family. RpoS subfamily. Interacts with the RNA polymerase core enzyme and RssB.

It is found in the cytoplasm. Its function is as follows. Sigma factors are initiation factors that promote the attachment of RNA polymerase to specific initiation sites and are then released. This sigma factor is the master transcriptional regulator of the stationary phase and the general stress response. Controls, positively or negatively, the expression of several hundred genes, which are mainly involved in metabolism, transport, regulation and stress management. In terms of biological role, protects stationary phase cells from killing induced by endoribonuclease MazF. The polypeptide is RNA polymerase sigma factor RpoS (Escherichia coli (strain K12)).